Here is a 1090-residue protein sequence, read N- to C-terminus: DNA damage-binding protein 1 (1090 aa).

Belongs to the DDB1 family. Component of the UV-DDB complex, which is composed of DDB1 and DDB2. In terms of tissue distribution, expressed in proliferating tissues. Highly expressed in shoot apical meristem (SAM). Expressed in roots, young leaves, flag leaves, and panicles. Not detected in mature leaves.

The protein localises to the nucleus. Its function is as follows. Required for DNA repair. Binds to DDB2 to form the UV-damaged DNA-binding protein complex (the UV-DDB complex). The UV-DDB complex may recognize UV-induced DNA damage and recruit proteins of the nucleotide excision repair pathway (the NER pathway) to initiate DNA repair. May function as the substrate recognition module for a DCX (DDB1-CUL4-X-box) E3 ubiquitin-protein ligase complex. The chain is DNA damage-binding protein 1 from Oryza sativa subsp. japonica (Rice).